A 227-amino-acid polypeptide reads, in one-letter code: Chloronitrobenzene nitroreductase (227 aa).

Residue 14-18 participates in FMN binding; it reads RRTKR. Ser44 serves as a coordination point for NADP(+). FMN contacts are provided by residues 172–173 and Arg215; that span reads GL.

It belongs to the nitroreductase family. FMN serves as cofactor.

The enzyme catalyses N-phenylhydroxylamine + 2 NADP(+) + H2O = nitrobenzene + 2 NADPH + 2 H(+). It participates in xenobiotic degradation; nitrobenzene degradation. The protein operates within xenobiotic degradation; 4-chloronitrobenzene degradation. Involved in the biodegradation of chlorinated nitroaromatic compounds. Catalyzes the reduction of 4-chloronitrobenzene to yield 1-hydroxylamino-4-chlorobenzene. Probably also able to catalyze the two-electron reduction of nitrobenzene (NB) to produce a nitrosobenzene (NOB) intermediate, which is immediately reduced to hydroxylaminobenzene (HAB) by a second two-electron transfer. This chain is Chloronitrobenzene nitroreductase, found in Comamonas testosteroni (Pseudomonas testosteroni).